The primary structure comprises 395 residues: Acetate kinase 2 (395 aa).

Asparagine 8 serves as a coordination point for Mg(2+). ATP is bound at residue lysine 15. Arginine 89 lines the substrate pocket. Aspartate 146 (proton donor/acceptor) is an active-site residue. ATP is bound by residues 206 to 210 (HIGNG), 283 to 285 (DMR), and 331 to 335 (GVGEN). Mg(2+) is bound at residue glutamate 383.

Belongs to the acetokinase family. Homodimer. Mg(2+) is required as a cofactor. It depends on Mn(2+) as a cofactor.

Its subcellular location is the cytoplasm. It carries out the reaction acetate + ATP = acetyl phosphate + ADP. It functions in the pathway metabolic intermediate biosynthesis; acetyl-CoA biosynthesis; acetyl-CoA from acetate: step 1/2. Functionally, catalyzes the formation of acetyl phosphate from acetate and ATP. Can also catalyze the reverse reaction. This Lactococcus lactis subsp. lactis (strain IL1403) (Streptococcus lactis) protein is Acetate kinase 2.